A 191-amino-acid polypeptide reads, in one-letter code: 3-isopropylmalate dehydratase small subunit (191 aa).

This sequence belongs to the LeuD family. LeuD type 1 subfamily. As to quaternary structure, heterodimer of LeuC and LeuD.

The enzyme catalyses (2R,3S)-3-isopropylmalate = (2S)-2-isopropylmalate. It functions in the pathway amino-acid biosynthesis; L-leucine biosynthesis; L-leucine from 3-methyl-2-oxobutanoate: step 2/4. Catalyzes the isomerization between 2-isopropylmalate and 3-isopropylmalate, via the formation of 2-isopropylmaleate. This Lactococcus lactis subsp. cremoris (strain MG1363) protein is 3-isopropylmalate dehydratase small subunit.